The following is a 212-amino-acid chain: FMN-dependent NAD(P)H:quinone oxidoreductase 1 (212 aa).

FMN contacts are provided by residues S10, 16–18 (SQS), and 97–100 (MYNF). 2 residues coordinate substrate: N99 and Y131. FMN is bound by residues 145–148 (SRGG) and E187. E188 lines the substrate pocket.

Belongs to the azoreductase type 1 family. As to quaternary structure, homodimer. Homotetramer formed by a dimer of dimers when the ionic strength is high. FMN serves as cofactor.

It carries out the reaction 2 a quinone + NADPH + H(+) = 2 a 1,4-benzosemiquinone + NADP(+). It catalyses the reaction 2 a quinone + NADH + H(+) = 2 a 1,4-benzosemiquinone + NAD(+). The catalysed reaction is N,N-dimethyl-1,4-phenylenediamine + anthranilate + 2 NAD(+) = 2-(4-dimethylaminophenyl)diazenylbenzoate + 2 NADH + 2 H(+). Azoreductase activity increases with salt strength. Functionally, quinone reductase that provides resistance to thiol-specific stress caused by electrophilic quinones. Shows a preference for benzoquinones. In terms of biological role, also exhibits azoreductase activity. Catalyzes the reductive cleavage of the azo bond in aromatic azo compounds to the corresponding amines. NADPH is the preferred electron donor for azoreductase activity, but it can also use NADH. Can reduce different classes of azo dyes, including the common azo dyes methyl red and p-aminoazobenzene sulfonamide (PAABSA). Can activate several azo pro-drugs used in the treatment of inflammatory bowel disease (IBD), including balsalazide, sulfasalazine and olsalazine. Also acts as a nitrodeductase, and can reduce and hence activate the nitroaromatic drug nitrofurazone, a broad spectrum antibiotic. This is FMN-dependent NAD(P)H:quinone oxidoreductase 1 from Pseudomonas aeruginosa (strain ATCC 15692 / DSM 22644 / CIP 104116 / JCM 14847 / LMG 12228 / 1C / PRS 101 / PAO1).